The sequence spans 307 residues: tRNA dimethylallyltransferase (307 aa).

Position 16 to 23 (16 to 23 (GCTAVGKT)) interacts with ATP. 18 to 23 (TAVGKT) is a substrate binding site. An interaction with substrate tRNA region spans residues 41 to 44 (DSLL).

The protein belongs to the IPP transferase family. As to quaternary structure, monomer. Requires Mg(2+) as cofactor.

It carries out the reaction adenosine(37) in tRNA + dimethylallyl diphosphate = N(6)-dimethylallyladenosine(37) in tRNA + diphosphate. In terms of biological role, catalyzes the transfer of a dimethylallyl group onto the adenine at position 37 in tRNAs that read codons beginning with uridine, leading to the formation of N6-(dimethylallyl)adenosine (i(6)A). The protein is tRNA dimethylallyltransferase of Opitutus terrae (strain DSM 11246 / JCM 15787 / PB90-1).